The chain runs to 340 residues: Replication initiation protein (340 aa).

The tract at residues 38-58 (PERKRTKRRRGEHSTKPKCEN) is disordered.

This chain is Replication initiation protein (repA1), found in Escherichia coli.